A 513-amino-acid polypeptide reads, in one-letter code: Membrane protein (513 aa).

4 consecutive repeat copies span residues 9–11, 12–14, 15–17, and 18–20. Positions 9–20 are 4 X 3 AA tandem repeats of P-S-A; the sequence is PSAPSAPSAPSA. A run of 14 helical transmembrane segments spans residues 32–52, 56–76, 79–99, 126–146, 165–185, 208–228, 254–274, 309–329, 332–352, 360–380, 400–420, 422–442, 447–467, and 487–507; these read LTLH…LAIP, GLTV…VVWI, AVSY…LIGF, TALA…VTGL, ILIG…SATA, NIAA…NVGI, QWLI…YFLV, LAAV…LHSF, ATVT…VMDW, PWGT…LLST, GALL…LGFA, ATAL…TLPG, VGMT…PINA, and IGIP…ATYW.

The protein belongs to the SLC13A/DASS transporter (TC 2.A.47) family. DIT1 subfamily.

The protein localises to the cell membrane. In Cupriavidus necator (strain ATCC 17699 / DSM 428 / KCTC 22496 / NCIMB 10442 / H16 / Stanier 337) (Ralstonia eutropha), this protein is Membrane protein.